Here is a 326-residue protein sequence, read N- to C-terminus: Olfactory receptor 11H1 (326 aa).

The Extracellular portion of the chain corresponds to 1-44 (MCPLTLQVTGLMNVSEPNSSFAFVNEFILQGFSCEWTIQIFLFS). N-linked (GlcNAc...) asparagine glycans are attached at residues Asn-13 and Asn-18. The helical transmembrane segment at 45–65 (LFTTTYALTITGNGAIAFVLW) threads the bilayer. Residues 66–72 (CDRRLHT) are Cytoplasmic-facing. Residues 73–93 (PMYMFLGNFSFLEIWYVSSTV) traverse the membrane as a helical segment. Residues 94-112 (PKMLVNFLSEKKNISFAGC) are Extracellular-facing. An N-linked (GlcNAc...) asparagine glycan is attached at Asn-106. A disulfide bond links Cys-112 and Cys-194. Residues 113–133 (FLQFYFFFSLGTSECLLLTVM) form a helical membrane-spanning segment. Topologically, residues 134-158 (AFDQYLAICRPLLYPNIMTGHLYAK) are cytoplasmic. The helical transmembrane segment at 159 to 179 (LVILCWVCGFLWFLIPIVLIS) threads the bilayer. The Extracellular portion of the chain corresponds to 180–216 (QMPFCGPNIIDHVVCDPGPRFALDCVSAPRIQLFCYT). A helical transmembrane segment spans residues 217–237 (LSSLVIFGNFLFIIGSYTLVL). Topologically, residues 238 to 259 (KAMLGMPSSTGRHKAFSTCGSH) are cytoplasmic. A helical membrane pass occupies residues 260 to 280 (LAVVSLCYSSLMVMYVSPGLG). At 281–287 (HSTGMQK) the chain is on the extracellular side. Residues 288 to 308 (IETLFYAMVTPLFNPLIYSLQ) form a helical membrane-spanning segment. Over 309 to 326 (NKEIKAALRKVLGSSNII) the chain is Cytoplasmic.

It belongs to the G-protein coupled receptor 1 family.

Its subcellular location is the cell membrane. Functionally, odorant receptor. The sequence is that of Olfactory receptor 11H1 (OR11H1) from Homo sapiens (Human).